The following is a 184-amino-acid chain: ATP synthase subunit b, chloroplastic (184 aa).

The chain crosses the membrane as a helical span at residues Leu27–Leu49.

Belongs to the ATPase B chain family. In terms of assembly, F-type ATPases have 2 components, F(1) - the catalytic core - and F(0) - the membrane proton channel. F(1) has five subunits: alpha(3), beta(3), gamma(1), delta(1), epsilon(1). F(0) has four main subunits: a(1), b(1), b'(1) and c(10-14). The alpha and beta chains form an alternating ring which encloses part of the gamma chain. F(1) is attached to F(0) by a central stalk formed by the gamma and epsilon chains, while a peripheral stalk is formed by the delta, b and b' chains.

Its subcellular location is the plastid. It is found in the chloroplast thylakoid membrane. F(1)F(0) ATP synthase produces ATP from ADP in the presence of a proton or sodium gradient. F-type ATPases consist of two structural domains, F(1) containing the extramembraneous catalytic core and F(0) containing the membrane proton channel, linked together by a central stalk and a peripheral stalk. During catalysis, ATP synthesis in the catalytic domain of F(1) is coupled via a rotary mechanism of the central stalk subunits to proton translocation. In terms of biological role, component of the F(0) channel, it forms part of the peripheral stalk, linking F(1) to F(0). The protein is ATP synthase subunit b, chloroplastic of Lotus japonicus (Lotus corniculatus var. japonicus).